Here is a 95-residue protein sequence, read N- to C-terminus: Putative regulatory protein Pmob_0099 (95 aa).

It belongs to the RemA family.

This chain is Putative regulatory protein Pmob_0099, found in Petrotoga mobilis (strain DSM 10674 / SJ95).